Reading from the N-terminus, the 1162-residue chain is Glycerophosphocholine phosphodiesterase GDE1 (1162 aa).

One can recognise an SPX domain in the interval 1 to 155; it reads MKFGKTYVTH…TSILSQHSGV (155 aa). ANK repeat units follow at residues 346 to 375, 392 to 421, 423 to 452, 458 to 487, 492 to 521, and 525 to 554; these read YHRT…KWGL, EGLT…AQTL, CPNL…DVNY, RNET…NTEI, FGWT…SYDI, and SGWL…KLLL. The region spanning 817–1146 is the GP-PDE domain; sequence TRVIGHRGLG…DSVLAVREGL (330 aa).

It belongs to the GDE1 family.

It is found in the cytoplasm. It carries out the reaction sn-glycerol 3-phosphocholine + H2O = sn-glycerol 3-phosphate + choline + H(+). Glycerophosphocholine glycerophosphodiesterase responsible for the hydrolysis of intracellular glycerophosphocholine into glycerol-phosphate and choline. The choline is used for phosphatidyl-choline synthesis. Required for utilization of glycerophosphocholine as phosphate source. C.albicans can utilize GroPCho through transport and intracellular hydrolysis or through extracellular hydrolysis. The polypeptide is Glycerophosphocholine phosphodiesterase GDE1 (Candida albicans (strain SC5314 / ATCC MYA-2876) (Yeast)).